We begin with the raw amino-acid sequence, 424 residues long: Hemagglutinin-esterase (424 aa).

2 consecutive signal peptides follow at residues 1–16 (MFLLLRFVLVSCIIGS) and 1–18 (MFLLLRFVLVSCIIGSLG). An esterase domain 1 region spans residues 7 to 127 (FVLVSCIIGS…SNDIWMQNKG (121 aa)). Over 17–392 (LGFDNPPTNV…PICVYDPLPL (376 aa)) the chain is Virion surface. Ser-40 acts as the Nucleophile in catalysis. Cys-44 and Cys-65 form a disulfide bridge. Residues Asn-54, Asn-89, Asn-153, Asn-236, and Asn-301 are each glycosylated (N-linked (GlcNAc...) asparagine; by host). Intrachain disulfides connect Cys-113-Cys-162, Cys-197-Cys-276, and Cys-205-Cys-249. The segment at 128 to 266 (LFYTQVYKNM…GNYLAISNEL (139 aa)) is receptor binding. The esterase domain 2 stretch occupies residues 267–379 (LLTVPTKAIC…RCPTAADINT (113 aa)). The cysteines at positions 307 and 312 are disulfide-linked. Residue Asn-316 is glycosylated (N-linked (GlcNAc...) asparagine; by host). Residues Asp-326 and His-329 each act as charge relay system in the active site. A disulfide bridge links Cys-347 with Cys-371. Asn-358 carries an N-linked (GlcNAc...) asparagine; by host glycan. Residues 393 to 413 (ILLGILLGVAVIIIVVLLLYF) traverse the membrane as a helical segment. Residues 414 to 424 (MVDNGTRLHDA) are Intravirion-facing. A glycan (N-linked (GlcNAc...) asparagine; by host) is linked at Asn-417.

It belongs to the influenza type C/coronaviruses hemagglutinin-esterase family. As to quaternary structure, homodimer; disulfide-linked. Forms a complex with the M protein in the pre-Golgi. Associates then with S-M complex to form a ternary complex S-M-HE. Post-translationally, N-glycosylated in the host RER.

The protein resides in the virion membrane. It localises to the host cell membrane. It catalyses the reaction N-acetyl-9-O-acetylneuraminate + H2O = N-acetylneuraminate + acetate + H(+). The catalysed reaction is N-acetyl-4-O-acetylneuraminate + H2O = N-acetylneuraminate + acetate + H(+). Structural protein that makes short spikes at the surface of the virus. Contains receptor binding and receptor-destroying activities. Mediates de-O-acetylation of N-acetyl-4-O-acetylneuraminic acid, which is probably the receptor determinant recognized by the virus on the surface of erythrocytes and susceptible cells. This receptor-destroying activity is important for virus release as it probably helps preventing self-aggregation and ensures the efficient spread of the progeny virus from cell to cell. May serve as a secondary viral attachment protein for initiating infection, the spike protein being the major one. May become a target for both the humoral and the cellular branches of the immune system. This is Hemagglutinin-esterase from Bos taurus (Bovine).